Consider the following 412-residue polypeptide: Light-independent protochlorophyllide reductase subunit N (412 aa).

Residues Cys-17, Cys-42, and Cys-103 each coordinate [4Fe-4S] cluster.

The protein belongs to the BchN/ChlN family. In terms of assembly, protochlorophyllide reductase is composed of three subunits; ChlL, ChlN and ChlB. Forms a heterotetramer of two ChlB and two ChlN subunits. [4Fe-4S] cluster is required as a cofactor.

The enzyme catalyses chlorophyllide a + oxidized 2[4Fe-4S]-[ferredoxin] + 2 ADP + 2 phosphate = protochlorophyllide a + reduced 2[4Fe-4S]-[ferredoxin] + 2 ATP + 2 H2O. Its pathway is porphyrin-containing compound metabolism; chlorophyll biosynthesis (light-independent). Its function is as follows. Component of the dark-operative protochlorophyllide reductase (DPOR) that uses Mg-ATP and reduced ferredoxin to reduce ring D of protochlorophyllide (Pchlide) to form chlorophyllide a (Chlide). This reaction is light-independent. The NB-protein (ChlN-ChlB) is the catalytic component of the complex. This Synechococcus sp. (strain CC9902) protein is Light-independent protochlorophyllide reductase subunit N.